Here is a 1115-residue protein sequence, read N- to C-terminus: Tbc2 translation factor, chloroplastic (1115 aa).

Low complexity-rich tracts occupy residues 69–87 (TASV…QLSS) and 163–175 (RRAG…SGRA). Disordered regions lie at residues 69 to 90 (TASV…SKAL) and 163 to 210 (RRAG…SSSS). The span at 176 to 186 (RGWGSGPGRNG) shows a compositional bias: gly residues. Over residues 187–210 (SGSSSVSVNGSGSSSNGSSSSSSS) the composition is skewed to low complexity. 9 tandem repeats follow at residues 483-521 (LVLE…WVEA), 607-645 (LDLT…WMQA), 685-723 (LAAT…WVGA), 724-763 (LLEE…AARL), 764-803 (MWRS…TQLC), 804-842 (LQAA…WLTR), 843-880 (MLLS…WLRR), 990-1029 (PAAH…QAAW), and 1030-1068 (WAAS…WLQA). A 9 X 38 AA approximate repeats region spans residues 483 to 1068 (LVLELSRARL…LRPPPEWLQA (586 aa)).

Part of a 400 kDa complex which is not stably associated with RNA.

The protein localises to the plastid. It localises to the chloroplast stroma. Its function is as follows. Required for expression of the chloroplast encoded psbC mRNA, most likely for translation initiation. Interacts with the 5'-UTR of psbC. This Chlamydomonas reinhardtii (Chlamydomonas smithii) protein is Tbc2 translation factor, chloroplastic (TBC2).